The chain runs to 188 residues: Trafficking protein particle complex subunit 5 (188 aa).

A Phosphoserine modification is found at Ser-10.

This sequence belongs to the TRAPP small subunits family. BET3 subfamily. As to quaternary structure, component of the multisubunit TRAPP (transport protein particle) complex, which includes at least TRAPPC2, TRAPPC2L, TRAPPC3, TRAPPC3L, TRAPPC4, TRAPPC5, TRAPPC8, TRAPPC9, TRAPPC10, TRAPPC11 and TRAPPC12.

The protein localises to the golgi apparatus. The protein resides in the cis-Golgi network. It is found in the endoplasmic reticulum. May play a role in vesicular transport from endoplasmic reticulum to Golgi. In Homo sapiens (Human), this protein is Trafficking protein particle complex subunit 5 (TRAPPC5).